The chain runs to 340 residues: 4-amino-5-hydroxymethyl-2-methylpyrimidine phosphate synthase THI5 (340 aa).

Residue lysine 62 is modified to N6-(pyridoxal phosphate)lysine. Histidine 66 is a catalytic residue. Residue 115–118 (GEFG) coordinates pyridoxal 5'-phosphate. The short motif at 195–199 (CCCFC) is the CCCFC; essential for catalytic activity, may be the site of iron coordination element.

The protein belongs to the NMT1/THI5 family. As to quaternary structure, homodimer. Fe cation serves as cofactor.

It catalyses the reaction N(6)-(pyridoxal phosphate)-L-lysyl-[4-amino-5-hydroxymethyl-2-methylpyrimidine phosphate synthase] + L-histidyl-[4-amino-5-hydroxymethyl-2-methylpyrimidine phosphate synthase] + 2 Fe(3+) + 4 H2O = L-lysyl-[4-amino-5-hydroxymethyl-2-methylpyrimidine phosphate synthase] + (2S)-2-amino-5-hydroxy-4-oxopentanoyl-[4-amino-5-hydroxymethyl-2-methylpyrimidine phosphate synthase] + 4-amino-2-methyl-5-(phosphooxymethyl)pyrimidine + 3-oxopropanoate + 2 Fe(2+) + 2 H(+). Its pathway is cofactor biosynthesis; thiamine diphosphate biosynthesis. Its function is as follows. Responsible for the formation of the pyrimidine heterocycle in the thiamine biosynthesis pathway. Catalyzes the formation of hydroxymethylpyrimidine phosphate (HMP-P) from histidine and pyridoxal phosphate (PLP). The protein uses PLP and the active site histidine to form HMP-P, generating an inactive enzyme. The enzyme can only undergo a single turnover, which suggests it is a suicide enzyme. The protein is 4-amino-5-hydroxymethyl-2-methylpyrimidine phosphate synthase THI5 of Saccharomyces cerevisiae (strain ATCC 204508 / S288c) (Baker's yeast).